The primary structure comprises 314 residues: Ribosomal RNA small subunit methyltransferase H (314 aa).

S-adenosyl-L-methionine-binding positions include 37 to 39 (GGH), D57, F83, D105, and Q112.

Belongs to the methyltransferase superfamily. RsmH family.

It localises to the cytoplasm. The enzyme catalyses cytidine(1402) in 16S rRNA + S-adenosyl-L-methionine = N(4)-methylcytidine(1402) in 16S rRNA + S-adenosyl-L-homocysteine + H(+). Functionally, specifically methylates the N4 position of cytidine in position 1402 (C1402) of 16S rRNA. The polypeptide is Ribosomal RNA small subunit methyltransferase H (Thioalkalivibrio sulfidiphilus (strain HL-EbGR7)).